Here is a 98-residue protein sequence, read N- to C-terminus: MFEQRVNSDVLTVATVNSQDQVTQKPLRDSVKQALKNYFAQLNGQDVNDLYELVLAEVEQPLLDMVMQYTRGNQTRAALMMGINRGTLRKKLKKYGMN.

Residues 74-93 (QTRAALMMGINRGTLRKKLK) constitute a DNA-binding region (H-T-H motif).

This sequence belongs to the transcriptional regulatory Fis family. Homodimer.

In terms of biological role, activates ribosomal RNA transcription. Plays a direct role in upstream activation of rRNA promoters. This is DNA-binding protein Fis from Photorhabdus laumondii subsp. laumondii (strain DSM 15139 / CIP 105565 / TT01) (Photorhabdus luminescens subsp. laumondii).